The following is a 255-amino-acid chain: Hemin import ATP-binding protein HmuV (255 aa).

The region spanning 2–238 is the ABC transporter domain; the sequence is LRVENLSIRR…EPLRAVFGLE (237 aa). 34–41 contacts ATP; sequence GPNGAGKS.

Belongs to the ABC transporter superfamily. Heme (hemin) importer (TC 3.A.1.14.5) family. As to quaternary structure, the complex is composed of two ATP-binding proteins (HmuV), two transmembrane proteins (HmuU) and a solute-binding protein (HmuT).

The protein localises to the cell inner membrane. Part of the ABC transporter complex HmuTUV involved in hemin import. Responsible for energy coupling to the transport system. This Pseudomonas aeruginosa (strain ATCC 15692 / DSM 22644 / CIP 104116 / JCM 14847 / LMG 12228 / 1C / PRS 101 / PAO1) protein is Hemin import ATP-binding protein HmuV.